The sequence spans 322 residues: Aspartate carbamoyltransferase catalytic subunit (322 aa).

Positions 70 and 71 each coordinate carbamoyl phosphate. An L-aspartate-binding site is contributed by lysine 98. Carbamoyl phosphate is bound by residues arginine 120, histidine 150, and glutamine 153. L-aspartate is bound by residues arginine 184 and arginine 239. 2 residues coordinate carbamoyl phosphate: glycine 280 and proline 281.

Belongs to the aspartate/ornithine carbamoyltransferase superfamily. ATCase family. In terms of assembly, heterododecamer (2C3:3R2) of six catalytic PyrB chains organized as two trimers (C3), and six regulatory PyrI chains organized as three dimers (R2).

The catalysed reaction is carbamoyl phosphate + L-aspartate = N-carbamoyl-L-aspartate + phosphate + H(+). The protein operates within pyrimidine metabolism; UMP biosynthesis via de novo pathway; (S)-dihydroorotate from bicarbonate: step 2/3. Its function is as follows. Catalyzes the condensation of carbamoyl phosphate and aspartate to form carbamoyl aspartate and inorganic phosphate, the committed step in the de novo pyrimidine nucleotide biosynthesis pathway. The polypeptide is Aspartate carbamoyltransferase catalytic subunit (Xylella fastidiosa (strain 9a5c)).